The chain runs to 160 residues: MSITKYPMTVQGARALEEEHLFLSKTERPRLSQAIGEARELGDLKENAEYHAAREEQGMVEARIRDIEGRLQNSVVIDVTTIPHTGKVIFGTTVVLANTETDEEVTYQIVGEDEADVKQGKLSSGAPIARAIIGKEEGDTVVVKTPSGTVEYEIVEVKHI.

The stretch at 53–73 (AREEQGMVEARIRDIEGRLQN) forms a coiled coil.

Belongs to the GreA/GreB family.

Necessary for efficient RNA polymerase transcription elongation past template-encoded arresting sites. The arresting sites in DNA have the property of trapping a certain fraction of elongating RNA polymerases that pass through, resulting in locked ternary complexes. Cleavage of the nascent transcript by cleavage factors such as GreA or GreB allows the resumption of elongation from the new 3'terminus. GreA releases sequences of 2 to 3 nucleotides. This Pseudomonas putida (strain ATCC 47054 / DSM 6125 / CFBP 8728 / NCIMB 11950 / KT2440) protein is Transcription elongation factor GreA.